A 230-amino-acid polypeptide reads, in one-letter code: Ribonuclease 3 (230 aa).

Positions 5-125 (YSRFYNILGY…VIGAIYLDSD (121 aa)) constitute an RNase III domain. Glu40 contacts Mg(2+). Asp44 is a catalytic residue. Mg(2+)-binding residues include Asp111 and Glu114. Residue Glu114 is part of the active site. One can recognise a DRBM domain in the interval 153–223 (DSKSKLQEIL…AEKMIEMLSQ (71 aa)).

Belongs to the ribonuclease III family. As to quaternary structure, homodimer. Requires Mg(2+) as cofactor.

It localises to the cytoplasm. The catalysed reaction is Endonucleolytic cleavage to 5'-phosphomonoester.. Functionally, digests double-stranded RNA. Involved in the processing of primary rRNA transcript to yield the immediate precursors to the large and small rRNAs (23S and 16S). Processes some mRNAs, and tRNAs when they are encoded in the rRNA operon. Processes pre-crRNA and tracrRNA of type II CRISPR loci if present in the organism. This is Ribonuclease 3 from Francisella tularensis subsp. holarctica (strain LVS).